A 361-amino-acid polypeptide reads, in one-letter code: Microtubule-associated protein Jupiter (361 aa).

Residues 1–15 are compositionally biased toward polar residues; the sequence is MISNYDITDSKSSSK. 2 disordered regions span residues 1–38 and 70–99; these read MISN…TPRN and IGDN…TPGK. Serine 24 is modified (phosphoserine). Threonine 35 is modified (phosphothreonine). Positions 73 to 87 are enriched in basic and acidic residues; sequence NPRRGQKPVDSHSRL. At threonine 96 the chain carries Phosphothreonine. Residue serine 105 is modified to Phosphoserine. Low complexity-rich tracts occupy residues 125–134 and 141–154; these read GSSTANTTNG and SGSV…VSSS. Disordered stretches follow at residues 125–165 and 328–361; these read GSST…SGSR and GSTN…SGLW. Residues serine 143 and serine 154 each carry the phosphoserine modification. Residues 155–165 are compositionally biased toward polar residues; sequence TENLKMNSGSR.

Belongs to the MAP Jupiter family.

The protein resides in the nucleus. It localises to the cytoplasm. The protein localises to the cytoskeleton. It is found in the spindle. Binds to all microtubule populations. This is Microtubule-associated protein Jupiter from Drosophila persimilis (Fruit fly).